The primary structure comprises 250 residues: 2,3-bisphosphoglycerate-dependent phosphoglycerate mutase (250 aa).

Residues 12–19 (RHGQSAWN), 25–26 (TG), Arg-64, 91–94 (ERHY), Lys-102, 118–119 (RR), and 185–186 (GN) each bind substrate. His-13 (tele-phosphohistidine intermediate) is an active-site residue. Glu-91 functions as the Proton donor/acceptor in the catalytic mechanism.

The protein belongs to the phosphoglycerate mutase family. BPG-dependent PGAM subfamily.

It catalyses the reaction (2R)-2-phosphoglycerate = (2R)-3-phosphoglycerate. It functions in the pathway carbohydrate degradation; glycolysis; pyruvate from D-glyceraldehyde 3-phosphate: step 3/5. Functionally, catalyzes the interconversion of 2-phosphoglycerate and 3-phosphoglycerate. The protein is 2,3-bisphosphoglycerate-dependent phosphoglycerate mutase of Corynebacterium efficiens (strain DSM 44549 / YS-314 / AJ 12310 / JCM 11189 / NBRC 100395).